We begin with the raw amino-acid sequence, 351 residues long: Fe(3+) ions import ATP-binding protein FbpC (351 aa).

The 231-residue stretch at Leu-9–Met-239 folds into the ABC transporter domain. Residue Gly-41–Thr-48 coordinates ATP.

The protein belongs to the ABC transporter superfamily. Fe(3+) ion importer (TC 3.A.1.10) family. In terms of assembly, the complex is composed of two ATP-binding proteins (FbpC), two transmembrane proteins (FbpB) and a solute-binding protein (FbpA).

The protein resides in the cell inner membrane. The enzyme catalyses Fe(3+)(out) + ATP + H2O = Fe(3+)(in) + ADP + phosphate + H(+). Functionally, part of the ABC transporter complex FbpABC involved in Fe(3+) ions import. Responsible for energy coupling to the transport system. In Mannheimia succiniciproducens (strain KCTC 0769BP / MBEL55E), this protein is Fe(3+) ions import ATP-binding protein FbpC.